The following is a 240-amino-acid chain: tRNA (guanine-N(1)-)-methyltransferase (240 aa).

Residues glycine 111 and 130 to 135 (IGDYVI) each bind S-adenosyl-L-methionine.

The protein belongs to the RNA methyltransferase TrmD family. Homodimer.

It is found in the cytoplasm. The enzyme catalyses guanosine(37) in tRNA + S-adenosyl-L-methionine = N(1)-methylguanosine(37) in tRNA + S-adenosyl-L-homocysteine + H(+). Functionally, specifically methylates guanosine-37 in various tRNAs. This Mycoplasma capricolum subsp. capricolum (strain California kid / ATCC 27343 / NCTC 10154) protein is tRNA (guanine-N(1)-)-methyltransferase.